The chain runs to 512 residues: 2-isopropylmalate synthase (512 aa).

In terms of domain architecture, Pyruvate carboxyltransferase spans 5–268 (LIIFDTTLRD…DVDIETQHIL (264 aa)). Positions 14, 202, 204, and 239 each coordinate Mn(2+). The interval 394 to 512 (SFVSLSQHSE…SKADRVAAQG (119 aa)) is regulatory domain.

The protein belongs to the alpha-IPM synthase/homocitrate synthase family. LeuA type 1 subfamily. As to quaternary structure, homodimer. Requires Mn(2+) as cofactor.

It is found in the cytoplasm. The catalysed reaction is 3-methyl-2-oxobutanoate + acetyl-CoA + H2O = (2S)-2-isopropylmalate + CoA + H(+). It functions in the pathway amino-acid biosynthesis; L-leucine biosynthesis; L-leucine from 3-methyl-2-oxobutanoate: step 1/4. Catalyzes the condensation of the acetyl group of acetyl-CoA with 3-methyl-2-oxobutanoate (2-ketoisovalerate) to form 3-carboxy-3-hydroxy-4-methylpentanoate (2-isopropylmalate). The chain is 2-isopropylmalate synthase from Albidiferax ferrireducens (strain ATCC BAA-621 / DSM 15236 / T118) (Rhodoferax ferrireducens).